Here is a 176-residue protein sequence, read N- to C-terminus: Isopentenyl-diphosphate Delta-isomerase (176 aa).

Positions 23 and 29 each coordinate Mn(2+). The Nudix hydrolase domain occupies 27–161; sequence LRHLAISVFV…PERFTPWLKI (135 aa). Cysteine 63 is an active-site residue. Mg(2+) is bound at residue cysteine 63. A Mn(2+)-binding site is contributed by histidine 65. Glutamate 83 is a Mg(2+) binding site. Mn(2+) is bound by residues glutamate 109 and glutamate 111. Glutamate 111 is an active-site residue.

This sequence belongs to the IPP isomerase type 1 family. Mg(2+) serves as cofactor. It depends on Mn(2+) as a cofactor.

The protein resides in the cytoplasm. The enzyme catalyses isopentenyl diphosphate = dimethylallyl diphosphate. It functions in the pathway isoprenoid biosynthesis; dimethylallyl diphosphate biosynthesis; dimethylallyl diphosphate from isopentenyl diphosphate: step 1/1. It participates in porphyrin-containing compound metabolism; chlorophyll biosynthesis. Functionally, catalyzes the 1,3-allylic rearrangement of the homoallylic substrate isopentenyl (IPP) to its highly electrophilic allylic isomer, dimethylallyl diphosphate (DMAPP). The polypeptide is Isopentenyl-diphosphate Delta-isomerase (Rhodobacter capsulatus (strain ATCC BAA-309 / NBRC 16581 / SB1003)).